The primary structure comprises 227 residues: Biosynthetic peptidoglycan transglycosylase (227 aa).

Residues 7–27 (VALLTLLLLVAAPYVLTLVYG) traverse the membrane as a helical segment.

The protein belongs to the glycosyltransferase 51 family.

The protein resides in the cell inner membrane. It catalyses the reaction [GlcNAc-(1-&gt;4)-Mur2Ac(oyl-L-Ala-gamma-D-Glu-L-Lys-D-Ala-D-Ala)](n)-di-trans,octa-cis-undecaprenyl diphosphate + beta-D-GlcNAc-(1-&gt;4)-Mur2Ac(oyl-L-Ala-gamma-D-Glu-L-Lys-D-Ala-D-Ala)-di-trans,octa-cis-undecaprenyl diphosphate = [GlcNAc-(1-&gt;4)-Mur2Ac(oyl-L-Ala-gamma-D-Glu-L-Lys-D-Ala-D-Ala)](n+1)-di-trans,octa-cis-undecaprenyl diphosphate + di-trans,octa-cis-undecaprenyl diphosphate + H(+). The protein operates within cell wall biogenesis; peptidoglycan biosynthesis. Its function is as follows. Peptidoglycan polymerase that catalyzes glycan chain elongation from lipid-linked precursors. The protein is Biosynthetic peptidoglycan transglycosylase of Rhodopseudomonas palustris (strain HaA2).